Here is a 103-residue protein sequence, read N- to C-terminus: Small ribosomal subunit protein uS10 (103 aa).

It belongs to the universal ribosomal protein uS10 family. In terms of assembly, part of the 30S ribosomal subunit.

Its function is as follows. Involved in the binding of tRNA to the ribosomes. The protein is Small ribosomal subunit protein uS10 of Xanthomonas axonopodis pv. citri (strain 306).